Reading from the N-terminus, the 1228-residue chain is Probable phospholipid-transporting ATPase 5 (1228 aa).

Over 1–74 (MARGRIRSKL…TTRYNLITFF (74 aa)) the chain is Cytoplasmic. A helical transmembrane segment spans residues 75–96 (PKSLYEQFHRAANLYFLVAAIL). The Extracellular portion of the chain corresponds to 97-100 (SVFP). A helical transmembrane segment spans residues 101-123 (LSPFNKWSMIAPLVFVVGLSMLK). Residues 124 to 305 (EALEDWRRFM…SRIERTMDYI (182 aa)) are Cytoplasmic-facing. The chain crosses the membrane as a helical span at residues 306-327 (IYTLLVLLILISCISSSGFAWE). The Extracellular portion of the chain corresponds to 328-359 (TEFHMPKMWYLRPGEPIDFTNPINPIYAGVVH). The helical transmembrane segment at 360–377 (LITALLLYGYLIPISLYV) threads the bilayer. Over 378–934 (SIEVVKVWQA…HGHWCYKRIA (557 aa)) the chain is Cytoplasmic. The 4-aspartylphosphate intermediate role is filled by Asp-425. Residue Lys-616 forms a Glycyl lysine isopeptide (Lys-Gly) (interchain with G-Cter in ubiquitin) linkage. Residues Asp-879 and Asp-883 each coordinate Mg(2+). A helical membrane pass occupies residues 935–954 (QMICYFFYKNIAFGLTLFYF). Residues 955–968 (EAFTGFSGQSVYND) lie on the Extracellular side of the membrane. Residues 969–988 (YYLLLFNVVLTSLPVIALGV) form a helical membrane-spanning segment. Topologically, residues 989–1018 (FEQDVSSEICLQFPALYQQGTKNLFFDWSR) are cytoplasmic. The helical transmembrane segment at 1019-1041 (ILGWMCNGVYASLVIFFLNIGII) threads the bilayer. Residues 1042 to 1054 (YSQAFRDNGQTAD) lie on the Extracellular side of the membrane. Residues 1055-1077 (MDAVGTTMFTCIIWAANVQIALT) form a helical membrane-spanning segment. Over 1078-1083 (MSHFTW) the chain is Cytoplasmic. The chain crosses the membrane as a helical span at residues 1084-1104 (IQHVLIWGSIGMWYLFVAIYS). Topologically, residues 1105–1117 (MMPPSYSGNIYRI) are extracellular. The chain crosses the membrane as a helical span at residues 1118–1146 (LDEILAPAPIYWMATLLVTVAAVLPYVAH). The Cytoplasmic portion of the chain corresponds to 1147-1228 (IAFQRFLNPL…AQDAMSPRSL (82 aa)).

The protein belongs to the cation transport ATPase (P-type) (TC 3.A.3) family. Type IV subfamily.

The protein localises to the membrane. It carries out the reaction ATP + H2O + phospholipidSide 1 = ADP + phosphate + phospholipidSide 2.. Its function is as follows. Involved in transport of phospholipids. The sequence is that of Probable phospholipid-transporting ATPase 5 from Arabidopsis thaliana (Mouse-ear cress).